The chain runs to 421 residues: MRRHVVLSIFVFAGIVFAAEEAEKLPKCEHVDPYENLEGWLDLKPLTERKCNHTLKENLTEAESKKSEWGIKSFAFDALSSEKLGPNRNVGKQAHKLCEEEKYDASYSTSVVVIHHNEALSTILRMINGIIEFTPKSLLKEIVLYEDASEEDHVLTKHLEKFAKIKGLEDKLIIKRSEYRQGLIRAKVHASRLATGEVIVFMDSHCEVAERWLEPLLQPIKEDPKSIVLPVVDLINPVSFDYSPSMVAKSGFDWGFTFKWIYLPWEYFETPENNVKPFNSPAMPGGLLAMRKEYFVELGEYDMGMEIWGSENIELSLKAWLCGGRVVVAPCSRVGHVFRMRRPYTSKPGMDTALYNAVRVAKTWLGEYESKFFAVKPRGAKMVFGDLTEPMQVKDRLKCKDMKWFIENVYPELEPKVHDEL.

Over 1-3 (MRR) the chain is Cytoplasmic. The helical; Signal-anchor for type II membrane protein transmembrane segment at 4 to 24 (HVVLSIFVFAGIVFAAEEAEK) threads the bilayer. Residues 25–421 (LPKCEHVDPY…ELEPKVHDEL (397 aa)) are Lumenal-facing. N-linked (GlcNAc...) asparagine glycans are attached at residues asparagine 52 and asparagine 58. 2 disulfides stabilise this stretch: cysteine 98–cysteine 331 and cysteine 322–cysteine 399. The segment at 106–219 (SYSTSVVVIH…ERWLEPLLQP (114 aa)) is catalytic subdomain A. Substrate-binding residues include aspartate 147 and arginine 180. Aspartate 203 provides a ligand contact to Mn(2+). Substrate is bound at residue serine 204. Residue histidine 205 coordinates Mn(2+). Residues 277-339 (PFNSPAMPGG…PCSRVGHVFR (63 aa)) form a catalytic subdomain B region. Tryptophan 308 contacts substrate. Position 336 (histidine 336) interacts with Mn(2+). The substrate site is built by arginine 339 and tyrosine 344. The Prevents secretion from ER motif lies at 418–421 (HDEL).

This sequence belongs to the glycosyltransferase 2 family. GalNAc-T subfamily. It depends on Mn(2+) as a cofactor.

It is found in the golgi apparatus membrane. Its pathway is protein modification; protein glycosylation. In terms of biological role, potential glycopeptide transferase involved in O-linked oligosaccharide biosynthesis. In contrast to other members of the family, it does not act as a peptide transferase that transfers GalNAc onto serine or threonine residue on peptides that have been tested. Some peptide transferase activity is however not excluded, considering that its appropriate peptide substrate may remain unidentified. This Caenorhabditis elegans protein is Probable N-acetylgalactosaminyltransferase 8 (gly-8).